The following is a 522-amino-acid chain: Protein nucleotidyltransferase YdiU (522 aa).

Gly-109, Gly-111, Arg-112, Lys-132, Asp-144, Gly-145, Arg-195, and Arg-202 together coordinate ATP. The active-site Proton acceptor is Asp-271. 2 residues coordinate Mg(2+): Asn-272 and Asp-281. Asp-281 provides a ligand contact to ATP.

The protein belongs to the SELO family. The cofactor is Mg(2+). Requires Mn(2+) as cofactor.

It catalyses the reaction L-seryl-[protein] + ATP = 3-O-(5'-adenylyl)-L-seryl-[protein] + diphosphate. It carries out the reaction L-threonyl-[protein] + ATP = 3-O-(5'-adenylyl)-L-threonyl-[protein] + diphosphate. The catalysed reaction is L-tyrosyl-[protein] + ATP = O-(5'-adenylyl)-L-tyrosyl-[protein] + diphosphate. The enzyme catalyses L-histidyl-[protein] + UTP = N(tele)-(5'-uridylyl)-L-histidyl-[protein] + diphosphate. It catalyses the reaction L-seryl-[protein] + UTP = O-(5'-uridylyl)-L-seryl-[protein] + diphosphate. It carries out the reaction L-tyrosyl-[protein] + UTP = O-(5'-uridylyl)-L-tyrosyl-[protein] + diphosphate. Its function is as follows. Nucleotidyltransferase involved in the post-translational modification of proteins. It can catalyze the addition of adenosine monophosphate (AMP) or uridine monophosphate (UMP) to a protein, resulting in modifications known as AMPylation and UMPylation. This is Protein nucleotidyltransferase YdiU from Burkholderia lata (strain ATCC 17760 / DSM 23089 / LMG 22485 / NCIMB 9086 / R18194 / 383).